A 252-amino-acid polypeptide reads, in one-letter code: MSGHSKWATIKRKKAVNDAQRSKNFAKLIRLIEVAAKQGGPDLAGNPGLAEAVQKAKKNSVPNDNIDRAIKRGSGLTGEHINYVSLVYEVKAFDGVALLVECLTDNKNRCAAGIRSIVTRSGCSMVNPGSLAYNFKRKGIVVLQDRDANGNLLSEDLVLSAVLEAEVDDIVPTGDCGFEIIAEPSNLSAVCNALRDSGIQYRSVETVYVPNSTVSLPEQKYDRIIRMIEALEESDDVQGVYTNLSGKDLACE.

This sequence belongs to the TACO1 family.

Its subcellular location is the cytoplasm. The polypeptide is Probable transcriptional regulatory protein TW504 (Tropheryma whipplei (strain TW08/27) (Whipple's bacillus)).